The sequence spans 506 residues: MSFSVEVLAGIAIELQRGIGHQDRFQRLITTLRQVLACDASALLRYESRQFIPLAIDGLAQDVLGRRFTLEGHPRLEAIARAGDVVRFPADSDLPDPYDGLIPGQESLKVHACVGLPLFAGQNLIGALTLDAMTPEQFEVFRDEELRLVAALAAGALSNALLIEQLESQNMLPGSSGVFEPIKETHMIGLSPAMTQLKKEIEIVAGSDLNVLIGGETGTGKELVAKAIHQGSPRAVNPLVYLNCAALPESVAESELFGHVKGAFTGAISNRSGKFEMADNGTLFLDEIGELSLALQAKLLRVLQYGDIQRVGDDRSLRVDVRVLAATNRDLREEVLAGRFRADLFHRLSVFPLFVPPLRERGDDVVLLAGYFCEQCRLRLGLSRVVLSPGARRHLLNYGWPGNVRELEHAIHRAVVLARATRAGDEVVLEEQHFALSEDVLPAPSAESFLALPACRNLRESTENFQREMIRQALAQNNHNWAASARALETDVANLHRLAKRLGLKD.

A 4-aspartylphosphate modification is found at aspartate 57. Residues 187–416 form the Sigma-54 factor interaction domain; the sequence is MIGLSPAMTQ…LEHAIHRAVV (230 aa). Residues 215-222 and 278-287 each bind ATP; these read GETGTGKE and ADNGTLFLDE. The H-T-H motif DNA-binding region spans 481 to 500; that stretch reads WAASARALETDVANLHRLAK.

The protein operates within nitrogen metabolism; nitric oxide reduction. Its function is as follows. Required for the expression of anaerobic nitric oxide (NO) reductase, acts as a transcriptional activator for at least the norVW operon. Activation also requires sigma-54. The protein is Anaerobic nitric oxide reductase transcription regulator NorR of Salmonella gallinarum (strain 287/91 / NCTC 13346).